Reading from the N-terminus, the 317-residue chain is RHOMBOID-like protein 2 (317 aa).

Transmembrane regions (helical) follow at residues 33 to 53 (SWLI…VMFV), 118 to 138 (WLHA…FIGI), 149 to 169 (VGLI…LFLQ), 172 to 192 (ISVG…SELL), 202 to 222 (AAAL…GMLP), 224 to 244 (VDNF…FVLL), and 272 to 292 (LFVV…VMLF). Serine 177 (nucleophile) is an active-site residue. Catalysis depends on histidine 229, which acts as the Charge relay system.

The protein belongs to the peptidase S54 family. Expressed in roots, seedlings, leaves, stems and flowers.

It is found in the golgi apparatus membrane. The enzyme catalyses Cleaves type-1 transmembrane domains using a catalytic dyad composed of serine and histidine that are contributed by different transmembrane domains.. Rhomboid-type serine protease that catalyzes intramembrane proteolysis. Can cleave the Drosophila proteins Spitz and Keren. May function in pollen elongation. The polypeptide is RHOMBOID-like protein 2 (Arabidopsis thaliana (Mouse-ear cress)).